The primary structure comprises 124 residues: U12-barytoxin-Tl1a (124 aa).

Residues 1–20 (MKTMIAWLVLLTFAAALCFA) form the signal peptide. Residues 21 to 78 (DEGLKQEHMNERKKSRFREDIPDEISEDLLLQEMEAMEAELLEKEMRMEENRNSREKR) constitute a propeptide that is removed on maturation. Cystine bridges form between Cys79-Cys99, Cys86-Cys104, and Cys98-Cys118.

The protein belongs to the neurotoxin 14 (magi-1) family. 04 (ICK-6) subfamily. Expressed by the venom gland.

It is found in the secreted. Ion channel inhibitor. This Trittame loki (Brush-footed trapdoor spider) protein is U12-barytoxin-Tl1a.